The sequence spans 153 residues: NADPH-dependent 7-cyano-7-deazaguanine reductase (153 aa).

The Thioimide intermediate role is filled by C51. D58 functions as the Proton donor in the catalytic mechanism. Substrate is bound by residues 73–75 and 92–93; these read VES and HE.

The protein belongs to the GTP cyclohydrolase I family. QueF type 1 subfamily.

It localises to the cytoplasm. It catalyses the reaction 7-aminomethyl-7-carbaguanine + 2 NADP(+) = 7-cyano-7-deazaguanine + 2 NADPH + 3 H(+). It functions in the pathway tRNA modification; tRNA-queuosine biosynthesis. In terms of biological role, catalyzes the NADPH-dependent reduction of 7-cyano-7-deazaguanine (preQ0) to 7-aminomethyl-7-deazaguanine (preQ1). In Granulibacter bethesdensis (strain ATCC BAA-1260 / CGDNIH1), this protein is NADPH-dependent 7-cyano-7-deazaguanine reductase.